Consider the following 1178-residue polypeptide: MLKFQTVRGGLRLLGVRRSSTAPVASPNVRRLEYKPIKKVMVANRGEIAIRVFRACTELGIRTVAVYSEQDTGQMHRQKADEAYLIGRGLAPVQAYLHIPDIIKVAKENGVDAVHPGYGFLSERADFAQACQDAGVRFIGPSPEVVRKMGDKVEARAIAIAAGVPVVPGTNSPINSLHEAHEFSNTYGFPIIFKAAYGGGGRGMRVVHSYEELEENYTRAYSEALAAFGNGALFVEKFIEKPRHIEVQILGDQYGNILHLYERDCSIQRRHQKVVEIAPATHLDPQLRSRLTSDSVKLAKQVGYENAGTVEFLVDKHGKHYFIEVNSRLQVEHTVTEEITDVDLVHAQIHVSEGRSLPDLGLRQENIRINGCAIQCRVTTEDPARSFQPDTGRIEVFRSGEGMGIRLDNASAFQGAVISPHYDSLLVKVIAHGKDHPTAATKMSRALAEFRVRGVKTNIPFLQNVLNNQQFLAGIVDTQFIDENPELFQLRPAQNRAQKLLHYLGHVMVNGPTTPIPVKVSPSPVDPIVPVVPIGPPPAGFRDILLREGPEGFARAVRNHQGLLLMDTTFRDAHQSLLATRVRTHDLKKIAPYVAHNFNNLFSIENWGGATFDVAMRFLYECPWRRLQELRELIPNIPFQMLLRGANAVGYTNYPDNVVFKFCEVAKENGMDVFRIFDSLNYLPNMLLGMEAAGSAGGVVEAAISYTGDVADPSRTKYSLEYYMGLAEELVRAGTHILCIKDMAGLLKPAACTMLVSSLRDRFPDLPLHIHTHDTSGSGVAAMLACAQAGADVVDVAVDSMSGMTSQPSMGALVACTKGTPLDTEVPLERVFDYSEYWEGARGLYAAFDCTATMKSGNSDVYENEIPGGQYTNLHFQAHSMGLGSKFKEVKKAYVEANQMLGDLIKVTPSSKIVGDLAQFMVQNGLSRAEAEAQAEELSFPRSVVEFLQGYIGIPHGGFPEPFRSKVLKDLPRIEGRPGASLPPLNLKELEKDLIDRHGEEVTPEDVLSAAMYPDVFAQFKDFTATFGPLDSLNTRLFLQGPKIAEEFEVELERGKTLHIKALAVSDLNRAGQRQVFFELNGQLRSILVKDTQAMKEMHFHPKALKDVKGQIGAPMPGKVIDVKVAAGAKVVKGQPLCVLSAMKMETVVTSPMEGTIRKVHVTKDMTLEGDDLILEIE.

The N-terminal 20 residues, 1–20 (MLKFQTVRGGLRLLGVRRSS), are a transit peptide targeting the mitochondrion. N6-acetyllysine is present on residues K35 and K39. The Biotin carboxylation domain occupies 36–486 (PIKKVMVANR…DTQFIDENPE (451 aa)). Position 79 is an N6-acetyllysine; alternate (K79). K79 bears the N6-succinyllysine; alternate mark. K148 and K152 each carry N6-acetyllysine. ATP contacts are provided by K152 and E236. One can recognise an ATP-grasp domain in the interval 156 to 353 (RAIAIAAGVP…LVHAQIHVSE (198 aa)). K241 is subject to N6-acetyllysine. H271 serves as a coordination point for ATP. N6-acetyllysine occurs at positions 297, 316, and 319. R328 is an active-site residue. K434 carries the N6-acetyllysine modification. Residue K442 is modified to N6-succinyllysine. One can recognise a Pyruvate carboxyltransferase domain in the interval 563–832 (LLLMDTTFRD…DTEVPLERVF (270 aa)). 571-575 (RDAHQ) provides a ligand contact to substrate. D572 contributes to the Mn(2+) binding site. K589 is subject to N6-acetyllysine. R644 contributes to the substrate binding site. K661 and K717 each carry N6-acetyllysine. K741 is a binding site for Mn(2+). K741 is subject to N6-carboxylysine. K748 carries the N6-acetyllysine modification. Mn(2+) contacts are provided by H771 and H773. An N6-acetyllysine modification is found at K892. T908 provides a ligand contact to substrate. An N6-acetyllysine modification is found at K969. An N6-acetyllysine; alternate modification is found at K988. N6-succinyllysine; alternate is present on K988. K992 bears the N6-acetyllysine mark. A Phosphothreonine modification is found at T1003. N6-acetyllysine is present on residues K1061, K1090, and K1124. In terms of domain architecture, Biotinyl-binding spans 1109-1178 (KGQIGAPMPG…EGDDLILEIE (70 aa)). The residue at position 1144 (K1144) is an N6-biotinyllysine.

As to quaternary structure, homotetramer. Interacts (via the biotin carboxylation domain) with SIRT4. Biotin is required as a cofactor. It depends on Mn(2+) as a cofactor. Post-translationally, acetylation of Lys-748 might play a role in catalytic activity regulation.

Its subcellular location is the mitochondrion matrix. It carries out the reaction hydrogencarbonate + pyruvate + ATP = oxaloacetate + ADP + phosphate + H(+). The protein operates within carbohydrate biosynthesis; gluconeogenesis. Its function is as follows. Pyruvate carboxylase catalyzes a 2-step reaction, involving the ATP-dependent carboxylation of the covalently attached biotin in the first step and the transfer of the carboxyl group to pyruvate in the second. Catalyzes in a tissue specific manner, the initial reactions of glucose (liver, kidney) and lipid (adipose tissue, liver, brain) synthesis from pyruvate. The chain is Pyruvate carboxylase, mitochondrial (Pc) from Rattus norvegicus (Rat).